We begin with the raw amino-acid sequence, 577 residues long: Isocitrate dehydrogenase kinase/phosphatase (577 aa).

Residues 315 to 321 and lysine 336 each bind ATP; that span reads APGIRGM. The active site involves aspartate 371.

This sequence belongs to the AceK family.

It localises to the cytoplasm. It carries out the reaction L-seryl-[isocitrate dehydrogenase] + ATP = O-phospho-L-seryl-[isocitrate dehydrogenase] + ADP + H(+). In terms of biological role, bifunctional enzyme which can phosphorylate or dephosphorylate isocitrate dehydrogenase (IDH) on a specific serine residue. This is a regulatory mechanism which enables bacteria to bypass the Krebs cycle via the glyoxylate shunt in response to the source of carbon. When bacteria are grown on glucose, IDH is fully active and unphosphorylated, but when grown on acetate or ethanol, the activity of IDH declines drastically concomitant with its phosphorylation. This is Isocitrate dehydrogenase kinase/phosphatase from Escherichia fergusonii (strain ATCC 35469 / DSM 13698 / CCUG 18766 / IAM 14443 / JCM 21226 / LMG 7866 / NBRC 102419 / NCTC 12128 / CDC 0568-73).